Consider the following 358-residue polypeptide: 3-O-methylredipecamine 2-O-methyltransferase IpeOMT3 (358 aa).

The S-adenosyl-L-methionine site is built by glycine 193, aspartate 216, aspartate 236, methionine 237, and lysine 250. Histidine 254 functions as the Proton acceptor in the catalytic mechanism.

It belongs to the class I-like SAM-binding methyltransferase superfamily. Cation-independent O-methyltransferase family. As to expression, expressed in roots.

The protein localises to the cytoplasm. It localises to the cytosol. The enzyme catalyses (S)-reticuline + S-adenosyl-L-methionine = (S)-laudanine + S-adenosyl-L-homocysteine + H(+). It functions in the pathway alkaloid biosynthesis. Functionally, O-methyltransferase involved in the biosynthesis of ipecac and benzylisoquinoline monoterpenoid-isoquinoline alkaloids natural products, starting by the condensation of dopamine and secologanin, and including emetine and cephaeline, drugs used both as anti-protozoal (e.g. treatment of ameobiasis) and as emetic agents. Catalyzes 2-O-methylation of 3-O-methylredipecamine and, with less efficiency, the 7-O-methylation of (S)-coclaurine, (R,S)-N-methylcoclaurine, (R,S)-4'-O-methylcoclaurine, (R,S)-6-O-methyllaudanosoline, nororientaline, (S)-norreticuline and (S)-reticuline. In Carapichea ipecacuanha (Ipecac), this protein is 3-O-methylredipecamine 2-O-methyltransferase IpeOMT3.